The chain runs to 88 residues: Small ribosomal subunit protein uS15 (88 aa).

Belongs to the universal ribosomal protein uS15 family. As to quaternary structure, part of the 30S ribosomal subunit. Forms a bridge to the 50S subunit in the 70S ribosome, contacting the 23S rRNA.

Its function is as follows. One of the primary rRNA binding proteins, it binds directly to 16S rRNA where it helps nucleate assembly of the platform of the 30S subunit by binding and bridging several RNA helices of the 16S rRNA. Functionally, forms an intersubunit bridge (bridge B4) with the 23S rRNA of the 50S subunit in the ribosome. The protein is Small ribosomal subunit protein uS15 of Desulfitobacterium hafniense (strain Y51).